We begin with the raw amino-acid sequence, 125 residues long: Fluoride-specific ion channel FluC (125 aa).

The next 4 membrane-spanning stretches (helical) occupy residues 9 to 29 (LFCA…YGLL), 32 to 52 (AFPY…GLIM), 67 to 87 (IGLT…SYET), and 99 to 119 (AFTN…LGII). Na(+)-binding residues include G75 and T78.

The protein belongs to the fluoride channel Fluc/FEX (TC 1.A.43) family.

The protein localises to the cell inner membrane. The enzyme catalyses fluoride(in) = fluoride(out). Na(+) is not transported, but it plays an essential structural role and its presence is essential for fluoride channel function. Fluoride-specific ion channel. Important for reducing fluoride concentration in the cell, thus reducing its toxicity. This chain is Fluoride-specific ion channel FluC, found in Trichlorobacter lovleyi (strain ATCC BAA-1151 / DSM 17278 / SZ) (Geobacter lovleyi).